We begin with the raw amino-acid sequence, 5088 residues long: MTYHDYALKDNAVLERDHKLALDNLVTNVIQYWTPILTMLLLAIYILKKIMQNPFVGPVSDNPLKRALQWIIFVFTRRNLYYQTPVFTRDESRLNVFLHNDFARLDRNTLNGYCKICNLYGHNHTEKHNPTIDALVLAKTCKLLRYNDKVTKPLAYTVHNIRAYEKNTKTFADTFGTTTTNIPTKYALAPKKAVADLTTIESNLGPIYVNNTIAYPHLGFIAYNNKQHLQELLANVTVVLDTVMVYTQYELDDATINIRKSNIKLHFVNDFDLTNALTNELKDPRTPWLLKAKKSSNKALEIEDDTEAEETQKTKRKGKLQPQTQLLQHTLAKQSKPARRQSHLTFGPAYMTMLCLISIMSPTQAKVCTTYEILDQADLYCNNLQNLTIAKYHAYANYEHMNKQCFSTDGAEFKDLVRLSVSNALNLNNVIKPLPKDDYILKAFSNALPLNTHVLSDYTTILDLQILMQFYNLNGSNVLYTENYSESEDYTGKVIQLLAQGTGGICKAPACIKFTGLDPTATDVEVKITERLTKRIKHQEHGKSLIIDPSCRKTCYCMRKPEIKPEPVEPVKYAPPAEFYTQLRYFQNHELRMYDDFEMGVLRYNNYTLSTFIYSNDTCIQTRGVHCVYNSEHFVITRVYNNLGNYLECGVNQEFCESLQQEFMFNEPQLVITESSTAEVSAQYKKICANHYTTLQSKYPLIEKLFWSNFNVSVNRALAAKEPATFLIVYDTPAIVKTIIADIIETMEECYGNTAIKLTSNDFNKLDDYNDFLIEHKPLLAKHKIMLIEDIDLIKVSMARAIYTIFDTYNPLVYGVFVLGTLNHKRYNETLAFNYYNGQTPTSYVEGILTNNWRELEDHTRQPLIIRVTDNVHTILARQLVTPPAKLAETMSKIPPLNNTSKVINTLTHYSAHILRTVENDSTQAYTYINKSVHNITDYVNGTVHNFTDYVYTAYNTTKNHIVTRYNNMLMAVYDIQLNFYNRYPLRQDFYHKGMRAFDLGRVCDFLHHSDTIVLYQDCINQKLDTIHVIKLRYGQNANAYHMYPLELPHTKQTIYELSDAIGFVYKDRKYNYFRTLFTNPGEYVLTIRENYLEYCKSDNSPTPAFAPDVPLQCFAYITGVQVVDSFIAEFGLFLMLYIAALIIILAIAITIRDNTMMMFLKLITIFAYTFGHLLLTPRVYGSYMFLSIYNILPYTSNTSYGCLLMLGALAIAVIDLLAYITQRYRSEFTKNVLQLVTLFFEIAAVTKYILIPYIFTSYGLVLTIIVSYVAYRYIHSRRPNYLKATVSNATAHADWVAYRNTTREKTDEAAKSNLSKIINTSVAEIQKDQLLECLYLAACHRATVASSTYNPKHYLHIPNYNTKIMFARDNELMNYSVLSTDFKNKSAASNPSISHIVLEMPVAINPLIKYTTRTSVSSLRGAVVNGYIYIQRHLFGSKKQEFEACYNNGKGLLNCKNLERSKYDIDSAELIGTLIRIPLHDKHSIPHISIHPDPLSYNGPVTLYLSRYDTELNKDVLCVHTGFMSEGHHDIKTVFGDCGGMLFDPKGRLLGLHCAGSDDVVFMDTTTGKSNIWTSYKLQHPSEIMITLNNEINLPNPANYDFETTKVVYQHPLRNVCATLETLQHLTNKTNAKLPYDSRLLSDFNITAEQYNQYGYYIDYNNFVNNFNRYTTTTIGTKSFETCIKYGLMDNKKPDYYNQSATIFNSPEHSSSGFDNTMDVLYVFVYMFTHTHPAFYIAAACVFGLFFVKMNRHLKMILSSIIFAIPHIYVNYYYGLVYMPLKWRKQITALAIRYNPYTAVAIRYNKNLNIAKDVAKELGTPKNLCTHLSTLLKCIKPYAAFNDLSQVINNVDDLMANWANTYNPEKLLKQYIEEIYKLYPILFIVFERIESYEDQIKTILSFISDTGEFDLNGFEIHFDEKEHTTNIIDTNVEDIREKLMAAKASLIALKNMNSEFDIETINSANIGELVRYLIISSTPETLDRDLLARTTELLVRHIHQLRDDSEHNENLITLLSEIYKHKDFLTASHLTSNLRDRNYVMNNLVRVIALFNKQINMQVAQKQYEARRIEDVRKKESKQIMEQNNRIRKMQRQNQNIASAIVHMVHACFANRFMLQNEAQKIMKALLGTNLELDPSDAEMQYYTAYRTGQVLTNQAIVTNFTTLTTILWTGNGYQTVPSMCGLHEFTCTATHKHGYFNCTMEIKDAWYKHAEECTKCKSYYRANKHPRCGAIYDTTVKRIPTLSNFIARYRSCPSCMPCTQCLSHREPGCESASYHIADTAHYQNQAYLTPINIKPDNLEYNFVDVNNGDVNAIYNGRIWLMRRTTAITPPPARYRNITNLKLKQTDPEGYYYISEVCPTDLAILNAMINQIQLKLLDRTVLNNENHVENDNTIKFNTPLNDTTLDDLRTKHKHLLVMKLKPDSEHHFIEVLDFVRMNNLPIFIAHVTYAENDVNHATIYVNYLQAWRNEILDDVTKTCDILEKIIKHPLDFQSGLVLLSRNSNVARYHQLCTNTNNGIRHTIDISCNKTSISYIDEVNNNVNVKIKQHIVKEYKIYEMLINQYPNLFLIEHKLVNFTIPHLLRYNMTALSFADLYGLIKEENWHPIYDTLPQVTYHKINDDLLLKIKSHTPSPQHTCCMLCRRFLVEFGLLLHKLNYKVFETTRAILTHYDFVLTADNVDLNGILDFEDYKLKKSTIAHDVKSQLRIMQPYYHALYSFYEHTGMYFISQPIYNSIVDPSLDLIQQFELAVEAIRNLPLDVKFDDTPLYRPTIQHLTEYLKLNIYAMEPEPLWNCYDTMNCPQIELPEIDNAITSIITKPTRPLSEYIELNHTTVKNLDGDVYCKIHHNEINNLQDILYSKPTDVTIHELYIVDHPYELESHNRMLRTSLNIWLHNLYDANVNLSHFDSINYDKTRKASFPIVGTVPAIPLRDCEVCQDEIPDDLKDVYDFGSCVHARAQLSDYTTPRKLNPLIEFDPALLRHGEFLPNNDYAYTMKTKPDHLIDCELKDYIDSTGLTALIPPLDINPAVHDPETTYSSSYYIKTPSETSIRQDLELFNQNTAGSVSPTVFLMAIELLHQLLTEEISASDGKPNCPMVPSEVPVRNKHKSAGTPYRKFGDSEFMRELYGNYRDAIVYHKRHSADQQLTLTINKVAPSKNHRDRTILAISINKSEPGRSLYRWNLDKIKYTSSLGGPILIGFTAQYGGWDKLYKYLYKNSPADHPDIAEHAVLGGKDYPKWDRRISNMLQLTTTTVLYSLIDPNTQSKLNNATPAQTWHEYMAETTQVLFDYLVFGNELYQKPGGVTSGNSRTADGNSLLHLLIDFYAIISQLIQSTPENVHLEVNLRNALCKTVFTKIPSDYIDSSCVTLRNTDILHTIRRRVAKGAYLSDDGLIVIDPRIIRYDDFMSVSHLISHYMIAQNKHKYHIDAIQRYAREFLSQDTIKFGDMVYPIPEFGRMYTAMLLSDNKNTLDPQINITRLLALFSYLYIYYFKYVDQPTHPILKFLDALRTYIELKLNTTDEIFLDCIKVPDLQDVEFDLKNCDLYENFDYLWGLDQSSAYMDYLCKYKHRYRNLSLFKRQLIQHHEEAQLHNENKLKNKGRLITYNCYVCGENAYLTCATCERAFCNSADTNHGSHMEQHLQYSGHTCLYLNCKTVKCHHCFTTDINLLYTTGRDHYCEAHKPKNAVRILNHNDNTKLPPLLYLCVTDTKRVTFYEQCYINYTKAHPTYAISKEQFMGLIQLYLHQDYTLPVNQLANRIRVSLQLSSYGVVRPYHQLIMQLTKLESKVLDSSVVDIPITLINSQEIGTYYIEIPREHKLDQHSTYSYLMGTREVSFTPNYHRLSSTNTHIWLTDTQIPNYCTFIRQRRLNTLSAILRNTTQHVPEYTRLLLEWNQQLPITAKPFAEFKPSLKIPAQPNVTDNINMLLKELNEKRFKIMFGGPGTGKSHTLSILINHLHEKGLRILVYTPSHQSANALLYKIANLIKRRTIQNPGLVRIITDGMKEEIKPHPYITYRTNMLDKDRICVTTIQSFSTVQHVKDIDLVILDEFSLTSDNYLLTGLAHLKPSTRVLFSGDPRQLSGVDEVRKPLQSRFHTLINYYTETYPREVHVLKYHFRCHPTIFQYFKDLYYADKDMECATSIADRIIRPLNPINTVQVSEPTFRNQGVILNQDEADKVLEILVLVNQTLALHSSYEYQPTIAIICSYKSQLQNFISLQQQKILSDNVNLSTIDSAQGDEFDIVILCLSQINNFTLNPNRFNVAISRAKSVLFITVPPIDKNPAFLFKDVYETLHKHNLTYFKIYNTSGKAILSLDSPTTLKTQAEKMPYTNVRNLDKETHTMQRKFPMNIVMDDCICFDAEFLNPRDNLQEPVMLSYGFSSKYGKRRIAGIPVRYIKDKFNRIIPHKYNYKDNNKPLTSTYSCDWMKKQHPDQYKHLLTSVLQGIRNDTTVDLRPLLNFCVDNMHVKPVIVTWSGASDHCFLRAHTLYPDISTVCNITTRCTSQPIYASPQGRHTYYLCQYHAHQLKDHINITHFVNLEIIDLKVDRNQYTNERTLRVYHNDYLKLTLDLDNVASNSLTDCHTRYCRTIHAPPTPHDPLDDAIMTQCIYQSFVLSHLEKLAYEPQANLKAFTSMDYRLKNFNPEMCKLRRELQKVWYEKYIDTKKTHCNMGCGKEPLQQALHNIDVLQGKSNPQNNMNTHTCDSEEHIYFDSHWYKDGGFKKPSYIFSDINKEHYYKLGTTGLCLYLNSKYAKYVHEYRTVSGNDVFKSLYSPYCDLGRKPHQAVIEPSCSIPDCIITSNIGERFQTLVCNVHQDQMELISKIAQATKYGYQFIYTGKILLNNHAALAKAPLDWDHLTLEIPGYNTRKQHSSHMTTKALGILHILQDSMLYTNRKTLNPNLPVILPGSASYLGDTVLANEMSKTLKQTKFVHIDPRLKIDNNTTHHRKTLMEMLDIGYTTELIISDIHDNNNPWIPELMEYTLKYLIDTGTLIMKITSRGATEAVLQQLEHMAKNFTYVRVCNLNAVTFSSELWIVFANKRKPPVQGWTSHELRAELRKHWYSMTRSIIQPLMRARQSVFRYSPK.

A helical transmembrane segment spans residues V26–I46. The interval E301 to Q323 is disordered. Transmembrane regions (helical) follow at residues H343–T363, G1132–I1152, T1156–L1176, Y1201–I1221, and I1250–V1270. Catalysis depends on for 3C-like proteinase residues H1434 and C1539. 2 helical membrane passes run F1729–V1749 and I1758–V1778. Residues K3093–A3112 form a disordered region. An ExoN domain is found at M4351–V4616. Active-site residues include D4362, E4364, and D4481. The Zn(2+) site is built by C4498, C4504, C4522, and H4525. Residues H4599, D4604, K4880, D4969, K4998, and E5035 contribute to the active site. The Nidovirus-type SAM-dependent 2'-O-MTase domain occupies L4844–K5088.

Homodimer. In terms of processing, specific enzymatic cleavages in vivo by its own protease yield mature proteins. 3CL-PRO is autocatalytically processed.

Its subcellular location is the membrane. It carries out the reaction a 5'-end (5'-triphosphoguanosine)-ribonucleoside in mRNA + S-adenosyl-L-methionine = a 5'-end (N(7)-methyl 5'-triphosphoguanosine)-ribonucleoside in mRNA + S-adenosyl-L-homocysteine. It catalyses the reaction RNA(n) + a ribonucleoside 5'-triphosphate = RNA(n+1) + diphosphate. The enzyme catalyses ATP + H2O = ADP + phosphate + H(+). The catalysed reaction is a 5'-end (N(7)-methyl 5'-triphosphoguanosine)-ribonucleoside in mRNA + S-adenosyl-L-methionine = a 5'-end (N(7)-methyl 5'-triphosphoguanosine)-(2'-O-methyl-ribonucleoside) in mRNA + S-adenosyl-L-homocysteine + H(+). Cysteine protease responsible for the majority of cleavages of the polyprotein. Recognizes substrates containing the core sequence [NT]-[EHKQSY]-|-[AGNST]. Functionally, the helicase which contains a zinc finger structure displays RNA and DNA duplex-unwinding activities with 5' to 3' polarity. In terms of biological role, RNA-directed RNA polymerase that catalyzes the transcription of viral genomic and subgenomic RNAs. Its function is as follows. Catalyzes the RNA N7-guanylyltransferase reaction to methylate the core cap structure GpppN-RNA into the type-0 cap (m)GpppN-RNA. The sequence is that of Replicase polyprotein 1ab from Ochlerotatus harrisoni (CAVV).